The chain runs to 208 residues: dITP/XTP pyrophosphatase (208 aa).

A substrate-binding site is contributed by 11–16; it reads TGNAKK. Catalysis depends on Asp-73, which acts as the Proton acceptor. Residue Asp-73 coordinates Mg(2+). Residues Ser-74, 157 to 160, Lys-180, and 185 to 186 each bind substrate; these read FGYD and HR.

It belongs to the HAM1 NTPase family. Homodimer. Requires Mg(2+) as cofactor.

The catalysed reaction is XTP + H2O = XMP + diphosphate + H(+). The enzyme catalyses dITP + H2O = dIMP + diphosphate + H(+). It catalyses the reaction ITP + H2O = IMP + diphosphate + H(+). Its function is as follows. Pyrophosphatase that catalyzes the hydrolysis of nucleoside triphosphates to their monophosphate derivatives, with a high preference for the non-canonical purine nucleotides XTP (xanthosine triphosphate), dITP (deoxyinosine triphosphate) and ITP. Seems to function as a house-cleaning enzyme that removes non-canonical purine nucleotides from the nucleotide pool, thus preventing their incorporation into DNA/RNA and avoiding chromosomal lesions. In Rhodopirellula baltica (strain DSM 10527 / NCIMB 13988 / SH1), this protein is dITP/XTP pyrophosphatase.